The primary structure comprises 874 residues: Alanine--tRNA ligase (874 aa).

Zn(2+) is bound by residues histidine 562, histidine 566, cysteine 664, and histidine 668.

It belongs to the class-II aminoacyl-tRNA synthetase family. It depends on Zn(2+) as a cofactor.

It is found in the cytoplasm. The catalysed reaction is tRNA(Ala) + L-alanine + ATP = L-alanyl-tRNA(Ala) + AMP + diphosphate. Catalyzes the attachment of alanine to tRNA(Ala) in a two-step reaction: alanine is first activated by ATP to form Ala-AMP and then transferred to the acceptor end of tRNA(Ala). Also edits incorrectly charged Ser-tRNA(Ala) and Gly-tRNA(Ala) via its editing domain. This is Alanine--tRNA ligase from Neisseria gonorrhoeae (strain ATCC 700825 / FA 1090).